The sequence spans 509 residues: Maturase K (509 aa).

This sequence belongs to the intron maturase 2 family. MatK subfamily.

It is found in the plastid. The protein resides in the chloroplast. Functionally, usually encoded in the trnK tRNA gene intron. Probably assists in splicing its own and other chloroplast group II introns. The chain is Maturase K from Clematis vitalba (Evergreen clematis).